Consider the following 301-residue polypeptide: Asialoglycoprotein receptor 2 (301 aa).

Residues 1 to 43 (MEKDCQDIQQLDSEENDHQLSGDDEHGSHVQDPRIENPHWKGQ) are disordered. The Cytoplasmic segment spans residues 1 to 58 (MEKDCQDIQQLDSEENDHQLSGDDEHGSHVQDPRIENPHWKGQPLSRPFPQRLCSTFR). S13 carries the post-translational modification Phosphoserine. Basic and acidic residues predominate over residues 16–39 (NDHQLSGDDEHGSHVQDPRIENPH). C54 is lipidated: S-palmitoyl cysteine. Residues 59 to 79 (LSLLALAFNILLLVVICVVSS) traverse the membrane as a helical; Signal-anchor for type II membrane protein segment. At 80–301 (QSIQLQEEFR…VCEKRRNITH (222 aa)) the chain is on the extracellular side. N-linked (GlcNAc...) asparagine glycosylation is found at N97 and N165. One can recognise a C-type lectin domain in the interval 169-295 (CCPVNWVEFG…QQVNRWVCEK (127 aa)). Intrachain disulfides connect C170–C181, C198–C293, and C271–C285. Residue N298 is glycosylated (N-linked (GlcNAc...) asparagine).

In terms of assembly, interacts with LASS2. In terms of tissue distribution, expressed exclusively in hepatic parenchymal cells.

It is found in the membrane. In terms of biological role, mediates the endocytosis of plasma glycoproteins to which the terminal sialic acid residue on their complex carbohydrate moieties has been removed. The receptor recognizes terminal galactose and N-acetylgalactosamine units. After ligand binding to the receptor, the resulting complex is internalized and transported to a sorting organelle, where receptor and ligand are disassociated. The receptor then returns to the cell membrane surface. The protein is Asialoglycoprotein receptor 2 (Asgr2) of Mus musculus (Mouse).